Consider the following 651-residue polypeptide: Acetyl-coenzyme A synthetase (651 aa).

Residues 191 to 194 (RGGK), Thr-311, and Asn-335 contribute to the CoA site. ATP-binding positions include 387-389 (GEP), 411-416 (DTWWQT), Asp-500, and Arg-515. Ser-523 serves as a coordination point for CoA. Arg-526 serves as a coordination point for ATP. Residues Val-537, His-539, and Val-542 each coordinate Mg(2+). Arg-584 lines the CoA pocket. Position 609 is an N6-acetyllysine (Lys-609).

Belongs to the ATP-dependent AMP-binding enzyme family. Mg(2+) serves as cofactor. Acetylated. Deacetylation by the SIR2-homolog deacetylase activates the enzyme.

It catalyses the reaction acetate + ATP + CoA = acetyl-CoA + AMP + diphosphate. Its function is as follows. Catalyzes the conversion of acetate into acetyl-CoA (AcCoA), an essential intermediate at the junction of anabolic and catabolic pathways. AcsA undergoes a two-step reaction. In the first half reaction, AcsA combines acetate with ATP to form acetyl-adenylate (AcAMP) intermediate. In the second half reaction, it can then transfer the acetyl group from AcAMP to the sulfhydryl group of CoA, forming the product AcCoA. The sequence is that of Acetyl-coenzyme A synthetase from Pseudomonas syringae pv. tomato (strain ATCC BAA-871 / DC3000).